The primary structure comprises 566 residues: Multidrug and toxin extrusion protein 1 (566 aa).

An N-acetylmethionine modification is found at Met-1. 13 helical membrane-spanning segments follow: residues 37–57, 72–92, 120–140, 152–172, 176–196, 216–236, 257–276, 295–315, 336–356, 370–390, 409–429, 437–457, and 543–563; these read LLVLAGPAFLAQLMMFLISFI, AVTLAIAVINVTGISVGHGLS, LILLLCCFPCWALFINTEQIL, LTQTYVMVFIPALPAAFLYTL, YLLNQGIVLPQVITGIAANLV, ALANTISQFALAIFLFLYILW, SFLQLAIPSMLMLCIEWWAY, SITYELAIIVYMIPAGFSVAA, AISLIVTELFAVTFCVLLLGC, IVALVAQVVPIYAVSHLFEAL, IVNAIGYYVIGLPIGISLMFV, LWSGIIICSVCQTSCFLVFIA, and GLLFLGVVLVLVGGILVRVYI.

It belongs to the multi antimicrobial extrusion (MATE) (TC 2.A.66.1) family. In terms of tissue distribution, highly expressed in kidney and placenta, moderately in stomach, colon, lung, spleen, skeletal muscle and prostate, and slightly in spleen. In the kidney, found in medulla and cortex, especially in the proximal convoluted and straight tubules. No expression was observed in heart, brain, small intestine and liver. Expressed in Sertoli cells in testis.

It is found in the cell membrane. The protein resides in the apical cell membrane. It catalyses the reaction thiamine(out) + H(+)(in) = thiamine(in) + H(+)(out). It carries out the reaction estrone 3-sulfate(in) + H(+)(out) = estrone 3-sulfate(out) + H(+)(in). The catalysed reaction is creatinine(in) + H(+)(out) = creatinine(out) + H(+)(in). The enzyme catalyses agmatine(in) + H(+)(out) = agmatine(out) + H(+)(in). Functionally, multidrug efflux pump that functions as a H(+)/organic cation antiporter. Plays a physiological role in the excretion of cationic compounds including endogenous metabolites, drugs, toxins through the kidney and liver, into urine and bile respectively. Mediates the efflux of endogenous compounds such as creatinine, vitamin B1/thiamine, agmatine and estrone-3-sulfate. May also contribute to regulate the transport of cationic compounds in testis across the blood-testis-barrier. This chain is Multidrug and toxin extrusion protein 1 (Slc47a1), found in Rattus norvegicus (Rat).